We begin with the raw amino-acid sequence, 108 residues long: Thiosulfate sulfurtransferase GlpE (108 aa).

Residues 17-105 form the Rhodanese domain; that stretch reads RQGAAVLVDI…WHRRFPANVA (89 aa). Cys-65 (cysteine persulfide intermediate) is an active-site residue.

Belongs to the GlpE family.

It localises to the cytoplasm. The catalysed reaction is thiosulfate + hydrogen cyanide = thiocyanate + sulfite + 2 H(+). It carries out the reaction thiosulfate + [thioredoxin]-dithiol = [thioredoxin]-disulfide + hydrogen sulfide + sulfite + 2 H(+). In terms of biological role, transferase that catalyzes the transfer of sulfur from thiosulfate to thiophilic acceptors such as cyanide or dithiols. May function in a CysM-independent thiosulfate assimilation pathway by catalyzing the conversion of thiosulfate to sulfite, which can then be used for L-cysteine biosynthesis. The chain is Thiosulfate sulfurtransferase GlpE from Salmonella agona (strain SL483).